Reading from the N-terminus, the 883-residue chain is Pre-mRNA-splicing factor syf1 homolog (883 aa).

HAT repeat units lie at residues 13 to 45, 46 to 78, 88 to 120, 122 to 156, 158 to 190, 268 to 303, 368 to 406, 463 to 495, 531 to 565, 570 to 604, 642 to 676, and 678 to 712; these read INFEVEDVPYEEEILRNAYSVKHWLRYIDHKAK, APNNGVNMVYERALKELPGSYKIWHNYLRTRRK, PMYEEVNSAFERALVFMHKMPRIWMDYGAFMTS, CKITRTRHVFDRALRALPITQHGRIWPLYLQFVRR, EMPETALRVYRRYLKLFPEDTEEYVDYLQEADR, GLFDRARDIYEEAIQTVTTVRDFTQVFDEYAQFEEL, DKPAEIISTYTEAVQTVQPKQAVGKLHTLWVEFAKFYEA, KRKIAYYDDTETVQARLHRSLKVWSMYADLEES, NYFEEAYRAYEKGISLFKWPNVYDIWNSYLTKFLE, TKLERARDLFEQCLDQCPPEHAKYFYLLYAKLEEE, YGLPRTREIYEKAIESLPEQNMRHMCVKFAELETK, and GEVDRARAIYAHCSQVCDPRITADFWQTWKEFEVR. 2 disordered regions span residues 794–851 and 864–883; these read RGET…DEEG and IPAKVFGSLKPSNQGDSDGE. Over residues 812-834 the composition is skewed to acidic residues; the sequence is DEIDIGDSDEDDEEEDDDEENEM. Composition is skewed to polar residues over residues 835-844 and 873-883; these read TNENQASAAV and KPSNQGDSDGE.

The protein belongs to the crooked-neck family. In terms of assembly, component of the NTC(Nineteen)/Prp19 complex composed of at least fand, Prp19,CG9667/ISY1 and Cdc5/CDC5L. Within the complex, interacts with Prp19 and ISY1/CG9667.

The protein localises to the nucleus. In terms of biological role, subunit of the NTC(Nineteen)/Prp19 complex, which is part of the spliceosome. The complex participates in spliceosome assembly, its remodeling and is required for efficient spliceosome activation. Essential for efficient pre-mRNA splicing. In embryos, efficient pre-mRNA splicing of zygotic transcripts is essential during dynamic cellular processes that require rapid division and/or dramatic changes in gene expression such as blastoderm cellularization, tracheal branching morphogenesis, Malpighian morphogenesis and epidermal development. Part of its role in promoting embryo tracheal development is also due to specifically splicing bnl transcripts which results in the activation of the BNL-FGF pathway. The chain is Pre-mRNA-splicing factor syf1 homolog from Drosophila melanogaster (Fruit fly).